The chain runs to 306 residues: Putative S-adenosyl-L-methionine-dependent methyltransferase Mvan_1345 (306 aa).

Residues Asp134 and 163 to 164 (DL) each bind S-adenosyl-L-methionine.

The protein belongs to the UPF0677 family.

In terms of biological role, exhibits S-adenosyl-L-methionine-dependent methyltransferase activity. The protein is Putative S-adenosyl-L-methionine-dependent methyltransferase Mvan_1345 of Mycolicibacterium vanbaalenii (strain DSM 7251 / JCM 13017 / BCRC 16820 / KCTC 9966 / NRRL B-24157 / PYR-1) (Mycobacterium vanbaalenii).